Reading from the N-terminus, the 81-residue chain is Cell division protein ZapB (81 aa).

Residues L5 to V81 adopt a coiled-coil conformation. An N6-acetyllysine modification is found at K10. Residues N36–W67 are disordered. The segment covering N37 to Q47 has biased composition (polar residues). The span at H48–E62 shows a compositional bias: basic and acidic residues.

The protein belongs to the ZapB family. Homodimer. The ends of the coiled-coil dimer bind to each other, forming polymers. Interacts with FtsZ.

The protein localises to the cytoplasm. Non-essential, abundant cell division factor that is required for proper Z-ring formation. It is recruited early to the divisome by direct interaction with FtsZ, stimulating Z-ring assembly and thereby promoting cell division earlier in the cell cycle. Its recruitment to the Z-ring requires functional FtsA or ZipA. The protein is Cell division protein ZapB of Shigella boydii serotype 4 (strain Sb227).